The chain runs to 567 residues: 2-succinyl-5-enolpyruvyl-6-hydroxy-3-cyclohexene-1-carboxylate synthase (567 aa).

This sequence belongs to the TPP enzyme family. MenD subfamily. In terms of assembly, homodimer. The cofactor is Mg(2+). Mn(2+) serves as cofactor. Thiamine diphosphate is required as a cofactor.

It catalyses the reaction isochorismate + 2-oxoglutarate + H(+) = 5-enolpyruvoyl-6-hydroxy-2-succinyl-cyclohex-3-ene-1-carboxylate + CO2. Its pathway is quinol/quinone metabolism; 1,4-dihydroxy-2-naphthoate biosynthesis; 1,4-dihydroxy-2-naphthoate from chorismate: step 2/7. It participates in quinol/quinone metabolism; menaquinone biosynthesis. Catalyzes the thiamine diphosphate-dependent decarboxylation of 2-oxoglutarate and the subsequent addition of the resulting succinic semialdehyde-thiamine pyrophosphate anion to isochorismate to yield 2-succinyl-5-enolpyruvyl-6-hydroxy-3-cyclohexene-1-carboxylate (SEPHCHC). The sequence is that of 2-succinyl-5-enolpyruvyl-6-hydroxy-3-cyclohexene-1-carboxylate synthase from Yersinia pseudotuberculosis serotype O:1b (strain IP 31758).